A 1089-amino-acid polypeptide reads, in one-letter code: Protein phosphatase 1 regulatory subunit 3A (1089 aa).

The tract at residues Lys32 to Asp57 is disordered. Positions Pro37 to Ser51 are enriched in low complexity. A phosphoserine; by GSK3 mark is found at Ser40 and Ser44. Phosphoserine occurs at positions 48 and 51. Position 58 is a phosphothreonine (Thr58). Positions Arg64 to Ser67 match the PP1-binding motif motif. Ser67 is modified (phosphoserine; by PKA). The CBM21 domain occupies Glu123–Val231. Disordered regions lie at residues Phe385 to Ser420, His479 to Asn501, and Pro566 to Ala649. Over residues Ser581–Pro600 the composition is skewed to polar residues. Positions Thr602 to Ser614 are enriched in basic and acidic residues. The segment covering Asp615–Asn625 has biased composition (polar residues). Ser821 is modified (phosphoserine). Residues Ile949–Glu968 form a disordered region. Residues Gly953 to Pro962 show a composition bias toward gly residues. The helical transmembrane segment at Leu1047–Phe1067 threads the bilayer.

As to quaternary structure, interacts with PPP1CC catalytic subunit of PP1, and associates with glycogen. In terms of processing, phosphorylation at Ser-48 by ISPK stimulates the dephosphorylation of glycogen synthase and phosphorylase kinase. In terms of tissue distribution, skeletal muscle and heart.

It localises to the membrane. Seems to act as a glycogen-targeting subunit for PP1. PP1 is essential for cell division, and participates in the regulation of glycogen metabolism, muscle contractility and protein synthesis. Plays an important role in glycogen synthesis but is not essential for insulin activation of glycogen synthase. This chain is Protein phosphatase 1 regulatory subunit 3A (Ppp1r3a), found in Mus musculus (Mouse).